The primary structure comprises 329 residues: MNKRKPVVALVGPTSVGKTATAIELALTFGGEVVSADSRYLYRGMDIGTDKPTLEERRGVPHHLIDILDPRDDYSLALFQRDAQRAIEEIHARGRLPIVAGGTPLYLRALLEGWRIPPAPPNPELRAQLELRARREGPEALHRELQTVDPVAAARIPPENVRRVIRALEIFLTTGRRMTELEGREAPPWRVLWLGLTMPRDELYRRIDERVDRQVARGLVEEVQRLLEQGVPPDAPAMTALGYRQIVAFLTGQLSLEEAIQRIKYDTHRYARHQLTWLRRMKQVEWYDVTQPGWYEQLRERVERSLREESDEGDVAVHQSGGGKEAPRA.

Position 12–19 (Gly12–Thr19) interacts with ATP. Position 14 to 19 (Thr14 to Thr19) interacts with substrate. Residues Asp37–Tyr40 form an interaction with substrate tRNA region. The segment at Leu306–Ala329 is disordered. A compositionally biased stretch (gly residues) spans Ser320 to Ala329.

The protein belongs to the IPP transferase family. Monomer. It depends on Mg(2+) as a cofactor.

It carries out the reaction adenosine(37) in tRNA + dimethylallyl diphosphate = N(6)-dimethylallyladenosine(37) in tRNA + diphosphate. Its function is as follows. Catalyzes the transfer of a dimethylallyl group onto the adenine at position 37 in tRNAs that read codons beginning with uridine, leading to the formation of N6-(dimethylallyl)adenosine (i(6)A). This Thermomicrobium roseum (strain ATCC 27502 / DSM 5159 / P-2) protein is tRNA dimethylallyltransferase.